Consider the following 372-residue polypeptide: E3 ubiquitin-protein ligase RNF34 (372 aa).

The segment at 56–107 adopts an FYVE-type zinc-finger fold; sequence EGPNIVCKACGLSFSVFRKKHVCCDCKKDFCSVCSVLQENLRRCSTCHLLQE. Residues 115–134 form the SAP 1 domain; sequence LMRLKVKDLRQYLILRNIPT. S169 bears the Phosphoserine mark. A disordered region spans residues 194-252; it reads QGELMDGDQTSRSGVPAQVQSEITSANTEDDDDDDDEDDDDEEENAEDQNPGLSKERVR. Residues 201 to 220 show a composition bias toward polar residues; it reads DQTSRSGVPAQVQSEITSAN. Residues 221-240 show a composition bias toward acidic residues; the sequence is TEDDDDDDDEDDDDEEENAE. Phosphoserine is present on residues S254 and S256. Residues 264-278 form the SAP 2 domain; sequence VEGMSVRQLKEILAR. The RING-type zinc finger occupies 325–360; sequence CRICMDAVIDCVLLECGHMVTCTKCGKRMSECPICR.

Interacts with CASP8 and CASP10. Interacts with p53/TP53; involved in p53/TP53 ubiquitination. Interacts (via RING-type zinc finger) with MDM2; the interaction stabilizes MDM2. Interacts (via RING-type zinc finger) with PPARGC1A. Interacts with NOD1. Autoubiquitinated (in vitro). In terms of processing, proteolytically cleaved by caspases upon induction of apoptosis by TNF.

It is found in the cell membrane. The protein resides in the endomembrane system. The protein localises to the nucleus. Its subcellular location is the nucleus speckle. It localises to the cytoplasm. It is found in the cytosol. It catalyses the reaction S-ubiquitinyl-[E2 ubiquitin-conjugating enzyme]-L-cysteine + [acceptor protein]-L-lysine = [E2 ubiquitin-conjugating enzyme]-L-cysteine + N(6)-ubiquitinyl-[acceptor protein]-L-lysine.. The protein operates within protein modification; protein ubiquitination. Functionally, E3 ubiquitin-protein ligase that regulates several biological processes through the ubiquitin-mediated proteasomal degradation of various target proteins. Ubiquitinates the caspases CASP8 and CASP10, promoting their proteasomal degradation, to negatively regulate cell death downstream of death domain receptors in the extrinsic pathway of apoptosis. May mediate 'Lys-48'-linked polyubiquitination of RIPK1 and its subsequent proteasomal degradation thereby indirectly regulating the tumor necrosis factor-mediated signaling pathway. Negatively regulates p53/TP53 through its direct ubiquitination and targeting to proteasomal degradation. Indirectly, may also negatively regulate p53/TP53 through ubiquitination and degradation of SFN. Mediates PPARGC1A proteasomal degradation probably through ubiquitination thereby indirectly regulating the metabolism of brown fat cells. Possibly involved in innate immunity, through 'Lys-48'-linked polyubiquitination of NOD1 and its subsequent proteasomal degradation. The polypeptide is E3 ubiquitin-protein ligase RNF34 (RNF34) (Pongo abelii (Sumatran orangutan)).